Reading from the N-terminus, the 217-residue chain is Octanoyltransferase (217 aa).

Positions 30-209 (GNRPPTLLLL…AFAEVFGLRP (180 aa)) constitute a BPL/LPL catalytic domain. Residues 75–82 (RGGDVTYH), 139–141 (AIG), and 152–154 (GFA) contribute to the substrate site. The active-site Acyl-thioester intermediate is C170.

The protein belongs to the LipB family.

It is found in the cytoplasm. The catalysed reaction is octanoyl-[ACP] + L-lysyl-[protein] = N(6)-octanoyl-L-lysyl-[protein] + holo-[ACP] + H(+). It participates in protein modification; protein lipoylation via endogenous pathway; protein N(6)-(lipoyl)lysine from octanoyl-[acyl-carrier-protein]: step 1/2. Functionally, catalyzes the transfer of endogenously produced octanoic acid from octanoyl-acyl-carrier-protein onto the lipoyl domains of lipoate-dependent enzymes. Lipoyl-ACP can also act as a substrate although octanoyl-ACP is likely to be the physiological substrate. The chain is Octanoyltransferase from Thermus thermophilus (strain ATCC 27634 / DSM 579 / HB8).